The sequence spans 238 residues: Orotidine 5'-phosphate decarboxylase (238 aa).

Substrate-binding positions include D10, K32, 59–68 (DLKLHDIPNT), T122, R184, Q193, G213, and R214. Residue K61 is the Proton donor of the active site.

It belongs to the OMP decarboxylase family. Type 1 subfamily. In terms of assembly, homodimer.

It carries out the reaction orotidine 5'-phosphate + H(+) = UMP + CO2. It functions in the pathway pyrimidine metabolism; UMP biosynthesis via de novo pathway; UMP from orotate: step 2/2. Catalyzes the decarboxylation of orotidine 5'-monophosphate (OMP) to uridine 5'-monophosphate (UMP). This is Orotidine 5'-phosphate decarboxylase from Bacillus cereus (strain AH820).